Reading from the N-terminus, the 178-residue chain is Ribosome maturation factor RimM (178 aa).

The 80-residue stretch at 99–178 (EGDFYWHDLI…TIEVDWDAGF (80 aa)) folds into the PRC barrel domain.

Belongs to the RimM family. As to quaternary structure, binds ribosomal protein uS19.

Its subcellular location is the cytoplasm. Functionally, an accessory protein needed during the final step in the assembly of 30S ribosomal subunit, possibly for assembly of the head region. Essential for efficient processing of 16S rRNA. May be needed both before and after RbfA during the maturation of 16S rRNA. It has affinity for free ribosomal 30S subunits but not for 70S ribosomes. The sequence is that of Ribosome maturation factor RimM from Mannheimia succiniciproducens (strain KCTC 0769BP / MBEL55E).